Consider the following 561-residue polypeptide: uncharacterized protein (561 aa).

The first 24 residues, 1–24 (MELGAWRSILYIAFLFAITRHAFC), serve as a signal peptide directing secretion. The Lumenal portion of the chain corresponds to 25–509 (KAVNLVHSPE…GYVYLSEIKQ (485 aa)). The helical transmembrane segment at 510 to 530 (YSSLILISLWISLILFVSFLN) threads the bilayer. The Cytoplasmic portion of the chain corresponds to 531-561 (RRLILHYSFESVHQLKTLTRKFIYSSLLKQD).

It is found in the endoplasmic reticulum membrane. Its subcellular location is the golgi apparatus membrane. This is an uncharacterized protein from Schizosaccharomyces pombe (strain 972 / ATCC 24843) (Fission yeast).